A 139-amino-acid chain; its full sequence is MCVCRVDILSRFDIALSLLQSLTHSHTVLRHLCFLPTIIYKHLCEFTISFSSPVISTGQHIDVGDEDYHDGDDDVDYTDDVDDVDDPHGSPSQLLQGGYQRNQHYGGGNYQSGYYRPNKQHGNGYGGQYPKKYGSGYKH.

The tract at residues 61-139 is disordered; sequence IDVGDEDYHD…PKKYGSGYKH (79 aa). Acidic residues predominate over residues 64–85; it reads GDEDYHDGDDDVDYTDDVDDVD. Residues 90-103 are compositionally biased toward polar residues; that stretch reads SPSQLLQGGYQRNQ.

It belongs to the immunogenic miracidial antigen family.

The chain is Immunogenic miracidial antigen 8I' (8I') from Schistosoma japonicum (Blood fluke).